Consider the following 154-residue polypeptide: DNA gyrase inhibitor (154 aa).

The protein belongs to the DNA gyrase inhibitor family. Interacts with DNA gyrase.

The protein localises to the cytoplasm. Inhibits the supercoiling activity of DNA gyrase. Acts by inhibiting DNA gyrase at an early step, prior to (or at the step of) binding of DNA by the gyrase. It protects cells against toxins that target DNA gyrase, by inhibiting activity of these toxins and reducing the formation of lethal double-strand breaks in the cell. In Pectobacterium carotovorum subsp. carotovorum (strain PC1), this protein is DNA gyrase inhibitor.